A 273-amino-acid polypeptide reads, in one-letter code: MFKHTKMLQHPAKPDRPDPLFAKKMQEILGGQFGEISVAMQYLFQGWNTRGNEKYKDLLMDTATEELGHVEMIATMIARLLEDAPLDQQEKAAEDPVIGSILGGMNPHHAIVSGLGAMPESSTGVPWSGGYIVASGNLLADFRANLNAESQGRLQVARLFEMTDDKGVKDMLSFLLARDTMHQNQWLAAIKELEAQEGPVVPGTFPKALEKQEFSHQLINFSEGEVSAEQNWLNEKAPDGEAFEYVKEAKTFGEKPELKPAPPFVHNTLPGRE.

Residue E35 participates in Mn(2+) binding. 2 residues coordinate Ca(2+): D57 and D61. Mn(2+)-binding residues include E66, H69, E149, and H182. Positions 220, 222, and 224 each coordinate Ca(2+). A disordered region spans residues 254-273 (EKPELKPAPPFVHNTLPGRE).

Belongs to the manganese catalase family. The cofactor is Ca(2+). Mn(2+) is required as a cofactor.

It catalyses the reaction 2 H2O2 = O2 + 2 H2O. Its function is as follows. Catalyzes the decomposition of hydrogen peroxide into water and oxygen. The protein is Manganese catalase (ydbD) of Bacillus subtilis (strain 168).